Here is a 437-residue protein sequence, read N- to C-terminus: MNQFEPKFTLIDTVSNQSVVLEQKQINIYLCGPTVYNDLHLGNTRPLIVFDVLQRVLQAAQYKVQFVQNITDIDDKIIKIAQQQEISEAQLCKQQITAYKSLLKKLNILPIKHLQVTDKIDKMPGYIARLVKKGFAYVSPLGNTYFSVSQLPQYGILANRVVETIEDEATDKRNKLDFVLWKQTTAGVKWNSPWGWGRPGWHVECAFLIDYSFKDQLTIHGGGVDLKFPHHENENAMHMALYDKPLTQHWMHIGHLMFENQKMSKSLQNFLLAVDFLTIHDFRILRWLFYQKHYYHPLDLSQSLIEQACSDIKRIQKAVNVCRTWFVYSEQSAIPAPKQFEPVFKALLNNLNFANAITHIWKLVKQINHDVSKQNLSGLKEHLSHLEWALNILGIGFKSIHTKLNVQLIKKWASLRKNGQLDKADEVRQKLIKKGLL.

Cys-31 is a Zn(2+) binding site. Residues 33–43 (PTVYNDLHLGN) carry the 'HIGH' region motif. Zn(2+)-binding residues include Cys-205, His-230, and Glu-234. The short motif at 262–266 (KMSKS) is the 'KMSKS' region element. Lys-265 provides a ligand contact to ATP.

This sequence belongs to the class-I aminoacyl-tRNA synthetase family. Monomer. It depends on Zn(2+) as a cofactor.

Its subcellular location is the cytoplasm. The catalysed reaction is tRNA(Cys) + L-cysteine + ATP = L-cysteinyl-tRNA(Cys) + AMP + diphosphate. The sequence is that of Cysteine--tRNA ligase (cysS) from Mycoplasma pneumoniae (strain ATCC 29342 / M129 / Subtype 1) (Mycoplasmoides pneumoniae).